Consider the following 203-residue polypeptide: Inosine triphosphate pyrophosphatase (203 aa).

13-18 (TGNAKK) is a binding site for ITP. E43 provides a ligand contact to Mg(2+). ITP-binding positions include K55, 71 to 72 (DT), K88, 147 to 150 (FGWD), K170, and 175 to 176 (HR).

This sequence belongs to the HAM1 NTPase family. Homodimer. Requires Mg(2+) as cofactor. Mn(2+) is required as a cofactor.

Its subcellular location is the cytoplasm. The enzyme catalyses ITP + H2O = IMP + diphosphate + H(+). The catalysed reaction is dITP + H2O = dIMP + diphosphate + H(+). It carries out the reaction XTP + H2O = XMP + diphosphate + H(+). It catalyses the reaction N(6)-hydroxy-dATP + H2O = N(6)-hydroxy-dAMP + diphosphate + H(+). Pyrophosphatase that hydrolyzes the non-canonical purine nucleotides inosine triphosphate (ITP), deoxyinosine triphosphate (dITP) as well as 2'-deoxy-N-6-hydroxylaminopurine triphosphate (dHAPTP) and xanthosine 5'-triphosphate (XTP) to their respective monophosphate derivatives. The enzyme does not distinguish between the deoxy- and ribose forms. Probably excludes non-canonical purines from RNA and DNA precursor pools, thus preventing their incorporation into RNA and DNA and avoiding chromosomal lesions. The chain is Inosine triphosphate pyrophosphatase (itpa) from Danio rerio (Zebrafish).